The following is an 82-amino-acid chain: Sec-independent protein translocase protein TatA (82 aa).

A helical transmembrane segment spans residues 1–21 (MGSFSIWHWLIVLLIVVMVFG). Residues 46–82 (GASTDDSATTSAPAGQVTNNSTAADKTTIDVEAKHKS) are disordered. A compositionally biased stretch (polar residues) spans 49-70 (TDDSATTSAPAGQVTNNSTAAD). Positions 72-82 (TTIDVEAKHKS) are enriched in basic and acidic residues.

This sequence belongs to the TatA/E family. In terms of assembly, the Tat system comprises two distinct complexes: a TatABC complex, containing multiple copies of TatA, TatB and TatC subunits, and a separate TatA complex, containing only TatA subunits. Substrates initially bind to the TatABC complex, which probably triggers association of the separate TatA complex to form the active translocon.

It is found in the cell inner membrane. Its function is as follows. Part of the twin-arginine translocation (Tat) system that transports large folded proteins containing a characteristic twin-arginine motif in their signal peptide across membranes. TatA could form the protein-conducting channel of the Tat system. This Acidovorax sp. (strain JS42) protein is Sec-independent protein translocase protein TatA.